The chain runs to 208 residues: Putative 3-methyladenine DNA glycosylase (208 aa).

The protein belongs to the DNA glycosylase MPG family.

The chain is Putative 3-methyladenine DNA glycosylase from Lactobacillus johnsonii (strain CNCM I-12250 / La1 / NCC 533).